The chain runs to 501 residues: Trans-cinnamate 4-monooxygenase (501 aa).

Residues 3-23 (LVLLEKALLGLFAAAVLAVAV) form a helical membrane-spanning segment. Residues 213–218 (RSRLSQ) and Ala302 contribute to the (E)-cinnamate site. A heme-binding site is contributed by Cys443.

It belongs to the cytochrome P450 family. Heme is required as a cofactor.

It is found in the membrane. The catalysed reaction is (E)-cinnamate + reduced [NADPH--hemoprotein reductase] + O2 = (E)-4-coumarate + oxidized [NADPH--hemoprotein reductase] + H2O + H(+). It participates in phenylpropanoid metabolism; trans-4-coumarate biosynthesis; trans-4-coumarate from trans-cinnamate: step 1/1. In terms of biological role, catalyzes the first oxidative step of the phenylpropanoid pathway in higher plants by transforming trans-cinnamate into p-coumarate. The compounds formed by this pathway are essential components for lignification, pollination, and defense against ultraviolet light, predators and pathogens. Can also use 2-naphthoic acid as substrate. The protein is Trans-cinnamate 4-monooxygenase of Sorghum bicolor (Sorghum).